We begin with the raw amino-acid sequence, 110 residues long: Small ribosomal subunit protein eS24 (110 aa).

Positions 91–110 (RNKVEEQAEEAEEAEAGAAE) are disordered. A compositionally biased stretch (acidic residues) spans 97–110 (QAEEAEEAEAGAAE).

It belongs to the eukaryotic ribosomal protein eS24 family.

In Archaeoglobus fulgidus (strain ATCC 49558 / DSM 4304 / JCM 9628 / NBRC 100126 / VC-16), this protein is Small ribosomal subunit protein eS24.